A 136-amino-acid chain; its full sequence is DNA-directed RNA polymerase subunit omega (136 aa).

It belongs to the RNA polymerase subunit omega family. As to quaternary structure, the RNAP catalytic core consists of 2 alpha, 1 beta, 1 beta' and 1 omega subunit. When a sigma factor is associated with the core the holoenzyme is formed, which can initiate transcription.

The enzyme catalyses RNA(n) + a ribonucleoside 5'-triphosphate = RNA(n+1) + diphosphate. Functionally, promotes RNA polymerase assembly. Latches the N- and C-terminal regions of the beta' subunit thereby facilitating its interaction with the beta and alpha subunits. This chain is DNA-directed RNA polymerase subunit omega, found in Acidiphilium cryptum (strain JF-5).